The chain runs to 145 residues: Small ribosomal subunit protein uS9 (145 aa).

This sequence belongs to the universal ribosomal protein uS9 family.

The protein localises to the cytoplasm. This chain is Small ribosomal subunit protein uS9 (RPS16), found in Gossypium hirsutum (Upland cotton).